Consider the following 287-residue polypeptide: Protease HtpX (287 aa).

2 helical membrane-spanning segments follow: residues 4 to 24 and 36 to 56; these read IMLF…VLNI and LSGL…ISLM. His143 serves as a coordination point for Zn(2+). Glu144 is a catalytic residue. Residue His147 coordinates Zn(2+). 2 helical membrane-spanning segments follow: residues 158 to 178 and 192 to 212; these read LMQG…ANIV and MVYF…ASFI. Glu221 is a Zn(2+) binding site.

The protein belongs to the peptidase M48B family. The cofactor is Zn(2+).

The protein resides in the cell inner membrane. The polypeptide is Protease HtpX (Vibrio parahaemolyticus serotype O3:K6 (strain RIMD 2210633)).